Here is a 117-residue protein sequence, read N- to C-terminus: Large ribosomal subunit protein uL18 (117 aa).

This sequence belongs to the universal ribosomal protein uL18 family. Part of the 50S ribosomal subunit; part of the 5S rRNA/L5/L18/L25 subcomplex. Contacts the 5S and 23S rRNAs.

In terms of biological role, this is one of the proteins that bind and probably mediate the attachment of the 5S RNA into the large ribosomal subunit, where it forms part of the central protuberance. The sequence is that of Large ribosomal subunit protein uL18 from Aster yellows witches'-broom phytoplasma (strain AYWB).